The primary structure comprises 1100 residues: MSQLFYQGDSDDELQEELTRQTTQASQSSKIKNEDEPDDSNHLNEVENEDSKVLDDDAVLYPLIPNEPDDIETSKPNINDIRPVDIQLTLPLPFQQKVVENSLITEDALIIMGKGLGLLDIVANLLHVLATPTSINGQLKRALVLVLNAKPIDNVRIKEALEELSWFSNTGKDDDDTAVESDDELFERPFNVVTADSLSIEKRRKLYISGGILSITSRILIVDLLSGIVHPNRVTGMLVLNADSLRHNSNESFILEIYRSKNTWGFIKAFSEAPETFVMEFSPLRTKMKELRLKNVLLWPRFRVEVSSCLNATNKTSHNKVIEVKVSLTNSMSQIQFGLMECLKKCIAELSRKNPELALDWWNMENVLDINFIRSIDSVMVPNWHRISYESKQLVKDIRFLRHLLKMLVTSDAVDFFGEIQLSLDANKPSVSRKYSESPWLLVDEAQLVISYAKKRIFYKNEYTLEENPKWEQLIHILHDISHERMTNHLQGPTLVACSDNLTCLELAKVLNASNKKRGVRQVLLNKLKWYRKQREETKKLVKEVQSQDTFPENATLNVSSTFSKEQVTTKRRRTRGASQVAAVEKLRNAGTNVDMEVVFEDHKLSEEIKKGSGDDLDDGQEENAANDSKIFEIQEQENEILIDDGDAEFDNGELEYVGDLPQHITTHFNKDLWAEHCNEYEYVDRQDEILISTFKSLNDNCSLQEMMPSYIIMFEPDISFIRQIEVYKAIVKDLQPKVYFMYYGESIEEQSHLTAIKREKDAFTKLIRENANLSHHFETNEDLSHYKNLAERKLKLSKLRKSNTRNAGGQQGFHNLTQDVVIVDTREFNASLPGLLYRYGIRVIPCMLTVGDYVITPDICLERKSISDLIGSLQNNRLANQCKKMLKYYAYPTLLIEFDEGQSFSLEPFSERRNYKNKDISTVHPISSKLSQDEIQLKLAKLVLRFPTLKIIWSSSPLQTVNIILELKLGREQPDPSNAVILGTNKVRSDFNSTAKGLKDGDNESKFKRLLNVPGVSKIDYFNLRKKIKSFNKLQKLSWNEINELINDEDLTDRIYYFLRTEKEEQEQESTDENLESPGKTTDDNALHDHHNDVPEAPV.

Positions 1–47 (MSQLFYQGDSDDELQEELTRQTTQASQSSKIKNEDEPDDSNHLNEVE) are disordered. Polar residues predominate over residues 20 to 30 (RQTTQASQSSK). The span at 31-47 (IKNEDEPDDSNHLNEVE) shows a compositional bias: basic and acidic residues. Residue Ser613 is modified to Phosphoserine. Residues 821–901 (VVIVDTREFN…YPTLLIEFDE (81 aa)) enclose the ERCC4 domain. Residues 1063-1100 (EKEEQEQESTDENLESPGKTTDDNALHDHHNDVPEAPV) form a disordered region. A compositionally biased stretch (acidic residues) spans 1065–1076 (EEQEQESTDENL). Residue Ser1071 is modified to Phosphoserine. Phosphothreonine is present on Thr1072. Residues 1082-1100 (TTDDNALHDHHNDVPEAPV) show a composition bias toward basic and acidic residues.

The protein belongs to the XPF family. As to quaternary structure, component of the nucleotide excision repair factor 1 (NEF1) complex consisting of RAD1, RAD10 and RAD14. Interacts with SAW1.

Its subcellular location is the nucleus. In terms of biological role, involved in nucleotide excision repair of DNA damaged with UV light, bulky adducts, or cross-linking agents. Along with RAD10 forms an endonuclease that specifically degrades single-stranded DNA. The polypeptide is DNA repair protein RAD1 (RAD1) (Saccharomyces cerevisiae (strain ATCC 204508 / S288c) (Baker's yeast)).